The following is a 279-amino-acid chain: Oxygen-dependent coproporphyrinogen-III oxidase (279 aa).

Ser102 is a substrate binding site. The a divalent metal cation site is built by His106 and His116. Residue His116 is the Proton donor of the active site. 118–120 (NTR) lines the substrate pocket. Positions 149 and 179 each coordinate a divalent metal cation. The tract at residues 244–279 (YVEFNLLYDRGTKFGLMTDGNVEAILMSLPPEVKFN) is important for dimerization.

It belongs to the aerobic coproporphyrinogen-III oxidase family. In terms of assembly, homodimer. Requires a divalent metal cation as cofactor.

The protein localises to the cytoplasm. The catalysed reaction is coproporphyrinogen III + O2 + 2 H(+) = protoporphyrinogen IX + 2 CO2 + 2 H2O. Its pathway is porphyrin-containing compound metabolism; protoporphyrin-IX biosynthesis; protoporphyrinogen-IX from coproporphyrinogen-III (O2 route): step 1/1. Functionally, involved in the heme biosynthesis. Catalyzes the aerobic oxidative decarboxylation of propionate groups of rings A and B of coproporphyrinogen-III to yield the vinyl groups in protoporphyrinogen-IX. In Rickettsia africae (strain ESF-5), this protein is Oxygen-dependent coproporphyrinogen-III oxidase.